A 148-amino-acid chain; its full sequence is Large ribosomal subunit protein bL9 (148 aa).

Belongs to the bacterial ribosomal protein bL9 family.

Its function is as follows. Binds to the 23S rRNA. The chain is Large ribosomal subunit protein bL9 from Streptomyces avermitilis (strain ATCC 31267 / DSM 46492 / JCM 5070 / NBRC 14893 / NCIMB 12804 / NRRL 8165 / MA-4680).